The sequence spans 868 residues: Leucine--tRNA ligase (868 aa).

A 'HIGH' region motif is present at residues 42 to 52 (PYPSGKLHMGH). The 'KMSKS' region signature appears at 627–631 (KMSKS). ATP is bound at residue lysine 630.

This sequence belongs to the class-I aminoacyl-tRNA synthetase family.

It localises to the cytoplasm. It catalyses the reaction tRNA(Leu) + L-leucine + ATP = L-leucyl-tRNA(Leu) + AMP + diphosphate. This is Leucine--tRNA ligase from Pseudomonas entomophila (strain L48).